Here is a 228-residue protein sequence, read N- to C-terminus: Urease accessory protein UreF 1 (228 aa).

Belongs to the UreF family. As to quaternary structure, ureD, UreF and UreG form a complex that acts as a GTP-hydrolysis-dependent molecular chaperone, activating the urease apoprotein by helping to assemble the nickel containing metallocenter of UreC. The UreE protein probably delivers the nickel.

It is found in the cytoplasm. In terms of biological role, required for maturation of urease via the functional incorporation of the urease nickel metallocenter. The chain is Urease accessory protein UreF 1 from Brucella canis (strain ATCC 23365 / NCTC 10854 / RM-666).